A 397-amino-acid chain; its full sequence is MAKAKFERTKPHCNIGTIGHVDHGKTSLTAAITKVLAENVAGNAAVDFANIDKAPEERERGITISTAHVEYETESRHYAHVDCPGHADYVKNMITGAAQMDGAILVVSAADGPMPQTKEHILLAKQVGVPTMVVFLNKVDQLDDPELLELVELEIREELSKRDFDGDNIPIIAGSALAALEGRDDNIGKDAILKLMAAVDEWIPQPERPLDKPFLMPIEDVFSISGRGTVVTGRVETGVVKVGEEVEIVGIKDTKKTVVTGVEMFRKLLDQGQAGDNIGALIRGVGREEVERGQVLAKPGSITPHTEFTSEVYVLSKDEGGRHTPFFANYRPQFYFRTTDVTGEVILPEGTEMVMPGDNVQLSVKLIAPIAMDPGLRFAIREGGRTVGAGVVATVTK.

The region spanning 10–207 (KPHCNIGTIG…AVDEWIPQPE (198 aa)) is the tr-type G domain. A G1 region spans residues 19 to 26 (GHVDHGKT). 19-26 (GHVDHGKT) is a binding site for GTP. Thr-26 is a binding site for Mg(2+). Positions 61–65 (GITIS) are G2. Residues 82–85 (DCPG) form a G3 region. Residues 82 to 86 (DCPGH) and 137 to 140 (NKVD) each bind GTP. Residues 137–140 (NKVD) are G4. The tract at residues 175-177 (SAL) is G5.

The protein belongs to the TRAFAC class translation factor GTPase superfamily. Classic translation factor GTPase family. EF-Tu/EF-1A subfamily. In terms of assembly, monomer.

It localises to the cytoplasm. It carries out the reaction GTP + H2O = GDP + phosphate + H(+). Its function is as follows. GTP hydrolase that promotes the GTP-dependent binding of aminoacyl-tRNA to the A-site of ribosomes during protein biosynthesis. This is Elongation factor Tu from Sphingopyxis alaskensis (strain DSM 13593 / LMG 18877 / RB2256) (Sphingomonas alaskensis).